We begin with the raw amino-acid sequence, 398 residues long: Mannitol-1-phosphate 5-dehydrogenase (398 aa).

Residue 10-21 (AVHFGAGNIGRG) participates in NAD(+) binding. Lysine 221 is a catalytic residue.

The protein belongs to the mannitol dehydrogenase family. As to quaternary structure, monomer.

It catalyses the reaction D-mannitol 1-phosphate + NAD(+) = beta-D-fructose 6-phosphate + NADH + H(+). Its function is as follows. Catalyzes the NAD(H)-dependent interconversion of D-fructose 6-phosphate and D-mannitol 1-phosphate in the mannitol metabolic pathway. This is Mannitol-1-phosphate 5-dehydrogenase from Chaetomium globosum (strain ATCC 6205 / CBS 148.51 / DSM 1962 / NBRC 6347 / NRRL 1970) (Soil fungus).